A 708-amino-acid chain; its full sequence is DNA-directed RNA polymerase III subunit RPC5 (708 aa).

Basic and acidic residues predominate over residues 146–155; that stretch reads DAKHREREAA. The segment at 146–170 is disordered; it reads DAKHREREAANEAGDSSQDEAEDDV. Phosphoserine is present on residues S161 and S162. K171 is covalently cross-linked (Glycyl lysine isopeptide (Lys-Gly) (interchain with G-Cter in SUMO2)). Phosphoserine is present on S192. Y224 carries the phosphotyrosine modification. K432 is covalently cross-linked (Glycyl lysine isopeptide (Lys-Gly) (interchain with G-Cter in SUMO2)). The disordered stretch occupies residues 485–552; it reads QLRVPAVPPG…DSFNGHPPQG (68 aa). Residue K498 forms a Glycyl lysine isopeptide (Lys-Gly) (interchain with G-Cter in SUMO1); alternate linkage. A Glycyl lysine isopeptide (Lys-Gly) (interchain with G-Cter in SUMO2); alternate cross-link involves residue K498. The span at 502–519 shows a compositional bias: acidic residues; sequence VSEEGEEDEEQEAEEEPM. Phosphoserine occurs at positions 503 and 522. A required for Pol III complex stability region spans residues 556–708; sequence TPVARELKAF…MWYLKGTVQS (153 aa). A Glycyl lysine isopeptide (Lys-Gly) (interchain with G-Cter in SUMO2) cross-link involves residue K659.

As to quaternary structure, component of the RNA polymerase III complex consisting of at least 17 subunits: a ten-subunit horseshoe-shaped catalytic core composed of POLR3A/RPC1, POLR3B/RPC2, POLR1C/RPAC1, POLR1D/RPAC2, POLR3K/RPC10, POLR2E/RPABC1, POLR2F/RPABC2, POLR2H/RPABC3, POLR2K/RPABC4 and POLR2L/RPABC5; the stalk composed of two subunits POLR3H/RPC8 and CRCP/RPC9, forming a structural mobile part that protrudes out of the core and functions primarily in transcription initiation; and additional subunits homologous to general transcription factors of the RNA polymerase II machinery, POLR3D/RPC4-POLR3E/RPC5 heterodimer and POLR3/CRPC3-POLR3F/RPC6-POLR3G/RPC7 heterotrimer.

The protein localises to the nucleus. DNA-dependent RNA polymerase catalyzes the transcription of DNA into RNA using the four ribonucleoside triphosphates as substrates. Specific peripheric component of RNA polymerase III (Pol III) which synthesizes small non-coding RNAs including 5S rRNA, snRNAs, tRNAs and miRNAs from at least 500 distinct genomic loci. Assembles with POLR3D/RPC4 forming a subcomplex that binds the Pol III core. Enables recruitment of Pol III at transcription initiation site and drives transcription initiation from both type 2 and type 3 DNA promoters. Required for efficient transcription termination and reinitiation. Plays a key role in sensing and limiting infection by intracellular bacteria and DNA viruses. Acts as a nuclear and cytosolic DNA sensor involved in innate immune response. Can sense non-self dsDNA that serves as template for transcription into dsRNA. The non-self RNA polymerase III transcripts, such as Epstein-Barr virus-encoded RNAs (EBERs) induce type I interferon and NF-kappa-B through the RIG-I pathway. This chain is DNA-directed RNA polymerase III subunit RPC5, found in Homo sapiens (Human).